Consider the following 206-residue polypeptide: LexA repressor (206 aa).

The H-T-H motif DNA-binding region spans 28–48; the sequence is RAEIARELGFRSANAAEEHLK. Residues S123 and K160 each act as for autocatalytic cleavage activity in the active site.

The protein belongs to the peptidase S24 family. As to quaternary structure, homodimer.

It catalyses the reaction Hydrolysis of Ala-|-Gly bond in repressor LexA.. Its function is as follows. Represses a number of genes involved in the response to DNA damage (SOS response), including recA and lexA. In the presence of single-stranded DNA, RecA interacts with LexA causing an autocatalytic cleavage which disrupts the DNA-binding part of LexA, leading to derepression of the SOS regulon and eventually DNA repair. The polypeptide is LexA repressor (Vibrio atlanticus (strain LGP32) (Vibrio splendidus (strain Mel32))).